The following is a 593-amino-acid chain: Myc box-dependent-interacting protein 1 (593 aa).

Ala-2 is modified (N-acetylalanine). Residues 2–122 (AEMGSKGVTA…DYHQKLVDQA (121 aa)) are interaction with BIN2. 2 coiled-coil regions span residues 15–42 (ASNV…TKDE) and 193–267 (HLVA…NDVL). The BAR domain occupies 29 to 276 (VLQKLGKADE…LVGLEKQHGS (248 aa)). Disordered stretches follow at residues 280 to 354 (TVKA…KEVK) and 400 to 488 (PVTS…AASS). Phosphoserine occurs at positions 296, 298, and 303. Phosphothreonine occurs at positions 307 and 323. Ser-331 is modified (phosphoserine). Positions 378 to 421 (FEAPGPFSEQASLLDLDFDPLPPVTSPVKAPTPSGQSIPWDLWE) are clathrin-binding. An SH3 domain is found at 520–593 (GFMFKVQAQH…FPENFTERVP (74 aa)).

As to quaternary structure, heterodimer with AMPH. Binds SH3GLB1. Interacts (via SH3 domain) with DNM1. Interacts with SYNJ1. Interacts (via SH3 domain) with DNM2. Isoform IIA interacts with CLTC. Isoform IIB does not interact with CLTC. Isoform IIC1 does not interact with CLTC. Isoform IIC2 does not interact with CLTC. Interacts with AP2A2. Interacts with AP2B1. Interacts with MYC (via N-terminal transactivation domain); the interaction requires the integrity of the conserved MYC box regions 1 and 2. Interacts with BIN2. Interacts with SNX4. Interacts (via BAR domain) with BACE1. Binds (via BAR domain) F-actin. In terms of assembly, (Microbial infection) Interacts (SH3 domain) with HCV NS5A. Post-translationally, phosphorylated by protein kinase C. As to expression, ubiquitous. Highest expression in the brain and muscle. Expressed in oligodendrocytes. Isoform IIA is expressed only in the brain, where it is detected in the gray matter, but not in the white matter. Isoform BIN1 is widely expressed with highest expression in skeletal muscle.

The protein localises to the nucleus. It localises to the cytoplasm. The protein resides in the endosome. Its subcellular location is the cell membrane. It is found in the sarcolemma. The protein localises to the T-tubule. Functionally, is a key player in the control of plasma membrane curvature, membrane shaping and membrane remodeling. Required in muscle cells for the formation of T-tubules, tubular invaginations of the plasma membrane that function in depolarization-contraction coupling. Is a negative regulator of endocytosis. Is also involved in the regulation of intracellular vesicles sorting, modulation of BACE1 trafficking and the control of amyloid-beta production. In neuronal circuits, endocytosis regulation may influence the internalization of PHF-tau aggregates. May be involved in the regulation of MYC activity and the control cell proliferation. Has actin bundling activity and stabilizes actin filaments against depolymerization in vitro. This chain is Myc box-dependent-interacting protein 1 (BIN1), found in Homo sapiens (Human).